Here is a 451-residue protein sequence, read N- to C-terminus: Phosphoglucosamine mutase (451 aa).

Serine 102 serves as the catalytic Phosphoserine intermediate. Residues serine 102, aspartate 243, aspartate 245, and aspartate 247 each coordinate Mg(2+). At serine 102 the chain carries Phosphoserine.

Belongs to the phosphohexose mutase family. It depends on Mg(2+) as a cofactor. Activated by phosphorylation.

It catalyses the reaction alpha-D-glucosamine 1-phosphate = D-glucosamine 6-phosphate. Catalyzes the conversion of glucosamine-6-phosphate to glucosamine-1-phosphate. The protein is Phosphoglucosamine mutase of Salinispora arenicola (strain CNS-205).